Reading from the N-terminus, the 85-residue chain is Large ribosomal subunit protein bL27 (85 aa).

Residues 1 to 25 form a disordered region; the sequence is MAHKKGVGSSRNGRDSNPKMLGVKR.

The protein belongs to the bacterial ribosomal protein bL27 family.

The sequence is that of Large ribosomal subunit protein bL27 from Roseiflexus castenholzii (strain DSM 13941 / HLO8).